Consider the following 88-residue polypeptide: PTS system cellobiose-specific EIIB component (88 aa).

Residues 3-88 form the PTS EIIB type-3 domain; the sequence is KKRIYLFCSA…IDTLLYGKVD (86 aa). Cysteine 10 serves as the catalytic Phosphocysteine intermediate. A Phosphocysteine; by EIIA modification is found at cysteine 10.

The protein resides in the cytoplasm. It catalyses the reaction D-cellobiose(out) + N(pros)-phospho-L-histidyl-[protein] = 6-phospho-beta-D-glucosyl-(1-&gt;4)-D-glucose(in) + L-histidyl-[protein]. The phosphoenolpyruvate-dependent sugar phosphotransferase system (sugar PTS), a major carbohydrate active transport system, catalyzes the phosphorylation of incoming sugar substrates concomitantly with their translocation across the cell membrane. The enzyme II CelABD PTS system is involved in cellobiose transport. The polypeptide is PTS system cellobiose-specific EIIB component (Aeromonas hydrophila).